The primary structure comprises 335 residues: Succinylglutamate desuccinylase (335 aa).

3 residues coordinate Zn(2+): histidine 59, glutamate 62, and histidine 151. Residue glutamate 215 is part of the active site.

Belongs to the AspA/AstE family. Succinylglutamate desuccinylase subfamily. Zn(2+) serves as cofactor.

The catalysed reaction is N-succinyl-L-glutamate + H2O = L-glutamate + succinate. It participates in amino-acid degradation; L-arginine degradation via AST pathway; L-glutamate and succinate from L-arginine: step 5/5. Functionally, transforms N(2)-succinylglutamate into succinate and glutamate. This is Succinylglutamate desuccinylase from Pseudomonas putida (strain GB-1).